Here is a 258-residue protein sequence, read N- to C-terminus: Tryptophan synthase alpha chain (258 aa).

Residues Glu-52 and Asp-63 each act as proton acceptor in the active site.

The protein belongs to the TrpA family. As to quaternary structure, tetramer of two alpha and two beta chains.

The enzyme catalyses (1S,2R)-1-C-(indol-3-yl)glycerol 3-phosphate + L-serine = D-glyceraldehyde 3-phosphate + L-tryptophan + H2O. The protein operates within amino-acid biosynthesis; L-tryptophan biosynthesis; L-tryptophan from chorismate: step 5/5. The alpha subunit is responsible for the aldol cleavage of indoleglycerol phosphate to indole and glyceraldehyde 3-phosphate. The polypeptide is Tryptophan synthase alpha chain (Streptococcus pneumoniae serotype 4 (strain ATCC BAA-334 / TIGR4)).